We begin with the raw amino-acid sequence, 251 residues long: Flagellar L-ring protein (251 aa).

An N-terminal signal peptide occupies residues 1–17 (MIRKLAALIVAAAALQA). The N-palmitoyl cysteine moiety is linked to residue C18. A lipid anchor (S-diacylglycerol cysteine) is attached at C18.

The protein belongs to the FlgH family. In terms of assembly, the basal body constitutes a major portion of the flagellar organelle and consists of four rings (L,P,S, and M) mounted on a central rod.

The protein resides in the cell outer membrane. Its subcellular location is the bacterial flagellum basal body. Its function is as follows. Assembles around the rod to form the L-ring and probably protects the motor/basal body from shearing forces during rotation. This chain is Flagellar L-ring protein, found in Maricaulis maris (strain MCS10) (Caulobacter maris).